The primary structure comprises 373 residues: Flagellar biosynthesis protein FlhF (373 aa).

GTP-binding positions include 179–186, 255–259, and 312–315; these read GPTGVGKT, DTAGR, and TKLD.

The protein belongs to the GTP-binding SRP family.

It is found in the cell membrane. Necessary for flagellar biosynthesis. May be involved in translocation of the flagellum. In Aquifex aeolicus (strain VF5), this protein is Flagellar biosynthesis protein FlhF (flhF).